The sequence spans 384 residues: Sialyltransferase-like protein 3 (384 aa).

Over 1–5 the chain is Cytoplasmic; the sequence is MKRRH. The chain crosses the membrane as a helical; Signal-anchor for type II membrane protein span at residues 6–26; the sequence is WSHPSCGLLLLVAVFCLLLVF. Over 27-384 the chain is Lumenal; that stretch reads RCSQLRHSGD…FRLPPVSFYR (358 aa). Residue Asn-241 is glycosylated (N-linked (GlcNAc...) asparagine).

This sequence belongs to the glycosyltransferase 29 family.

Its subcellular location is the golgi apparatus membrane. Functionally, possesses sialyltransferase-like activity in vitro. Transfers sialic acid to the glycoprotein asialofetuin. The transferred sialic acid is linked to galactose of Gal-beta-1,3-GalNAc through alpha-2,6-linkage. The protein is Sialyltransferase-like protein 3 of Oryza sativa subsp. japonica (Rice).